The following is a 339-amino-acid chain: Homeobox protein Hox-D13 (339 aa).

The tract at residues 1–33 (MSRSGTWDMDGLRADGGAAGAAPASSSSSVAAP) is disordered. The span at 20–33 (GAAPASSSSSVAAP) shows a compositional bias: low complexity. Positions 272–331 (GRKKRVPYTKLQLKELENEYAINKFINKDKRRRISAATNLSERQVTIWFQNRRVKDKKIV) form a DNA-binding region, homeobox.

It belongs to the Abd-B homeobox family.

Its subcellular location is the nucleus. Functionally, sequence-specific transcription factor that binds gene promoters and activates their transcription. Part of a developmental regulatory system that provides cells with specific positional identities on the anterior-posterior axis. The chain is Homeobox protein Hox-D13 (Hoxd13) from Mus musculus (Mouse).